A 195-amino-acid chain; its full sequence is Glucagon family neuropeptides (195 aa).

Residues 1-20 (MAKSSRATLALLIYGILMRY) form the signal peptide. Positions 21 to 82 (SQCTPIGMGF…YYPPERRAET (62 aa)) are excised as a propeptide. The interval 113–132 (VGEEEEDEEDSEPLSKRHSD) is disordered. A compositionally biased stretch (acidic residues) spans 115 to 124 (EEEEDEEDSE). Lysine 167 carries the post-translational modification Lysine amide. A propeptide spanning residues 171 to 195 (LVVPSVWTGIRDTVIITPEKRGKRY) is cleaved from the precursor.

It belongs to the glucagon family. As to expression, brain, testis, ovary and stomach. Not pancreas, pituitary, muscle and liver.

The protein resides in the secreted. Functionally, primary role of GHRH is to release GH from the pituitary. PACAP plays pivotal roles as a neurotransmitter and/or a neuromodulator. The protein is Glucagon family neuropeptides of Clarias macrocephalus (Bighead catfish).